A 517-amino-acid polypeptide reads, in one-letter code: Sterol 14-alpha demethylase CYP51C (517 aa).

The helical transmembrane segment at 10-30 (TLPLSVSIPLTTSIIIILSIV) threads the bilayer. Tyrosine 115 is a lanosterol binding site. Position 300 (glycine 300) interacts with itraconazole. Cysteine 458 lines the heme pocket.

It belongs to the cytochrome P450 family. It depends on heme as a cofactor.

Its subcellular location is the endoplasmic reticulum membrane. It functions in the pathway steroid metabolism; ergosterol biosynthesis. Functionally, together with cyp51A and cyp51B, encodes the sterol 14alpha-demethylase that plays a critical role in the third module of ergosterol biosynthesis pathway, being ergosterol the major sterol component in fungal membranes that participates in a variety of functions. Cyp51C does not seem to encode an active sterol 14-alpha-demethylase, but can impact indirectly on sterol 14alpha-demethylation, and is required for full virulence on host wheat ears, but not on Arabidopsis floral tissue or the fruits of apple and tomato. The third module or late pathway involves the ergosterol synthesis itself through consecutive reactions that mainly occur in the endoplasmic reticulum (ER) membrane. In filamentous fungi, during the initial step of this module, lanosterol (lanosta-8,24-dien-3beta-ol) can be metabolized to eburicol. Sterol 14alpha-demethylase catalyzes the three-step oxidative removal of the 14alpha-methyl group (C-32) of both these sterols in the form of formate, and converts eburicol and lanosterol to 14-demethyleburicol (4,4,24-trimethylergosta-8,14,24(28)-trienol) and 4,4-dimethyl-5alpha-cholesta-8,14,24-trien-3beta-ol, respectively, which are further metabolized by other enzymes in the pathway to ergosterol. This is Sterol 14-alpha demethylase CYP51C from Gibberella zeae (strain ATCC MYA-4620 / CBS 123657 / FGSC 9075 / NRRL 31084 / PH-1) (Wheat head blight fungus).